The primary structure comprises 936 residues: ABC transporter A family member 5 (936 aa).

7 helical membrane passes run 34–54, 340–360, 393–413, 422–442, 454–474, 484–501, and 527–547; these read LIVIPFYLCVLLVGIQVLFDT, ASLIGPIFFTWVILLLFPVML, FLAISIVYIICLMIFGSAIGL, SIQFIFYFLCINLQISIAFLV, VAAYLYVFGSGLLGAFLFQFL, WIYIMELYPGFSLYRGLY, and AMEEIFYIIIVEWFVALIAAY. Positions 614-851 constitute an ABC transporter domain; the sequence is IVCDNLKKVY…YGGSYVLTMT (238 aa). 652–659 lines the ATP pocket; that stretch reads GPNGAGKT.

Belongs to the ABC transporter superfamily. ABCA family. CPR flippase (TC 3.A.1.211) subfamily.

Its subcellular location is the membrane. This Arabidopsis thaliana (Mouse-ear cress) protein is ABC transporter A family member 5 (ABCA5).